The chain runs to 914 residues: Valine--tRNA ligase (914 aa).

The 'HIGH' region motif lies at 47–57 (PYPTGELHMGH). The 'KMSKS' region signature appears at 552–556 (KMSKS). Lys-555 is an ATP binding site.

This sequence belongs to the class-I aminoacyl-tRNA synthetase family. ValS type 2 subfamily.

It is found in the cytoplasm. The catalysed reaction is tRNA(Val) + L-valine + ATP = L-valyl-tRNA(Val) + AMP + diphosphate. Catalyzes the attachment of valine to tRNA(Val). As ValRS can inadvertently accommodate and process structurally similar amino acids such as threonine, to avoid such errors, it has a 'posttransfer' editing activity that hydrolyzes mischarged Thr-tRNA(Val) in a tRNA-dependent manner. The polypeptide is Valine--tRNA ligase (Methanopyrus kandleri (strain AV19 / DSM 6324 / JCM 9639 / NBRC 100938)).